A 32-amino-acid chain; its full sequence is GMWSKIKNAGKAAKAAAKAAGKAALGAVSEAM.

As to expression, expressed by the skin glands.

The protein resides in the secreted. It localises to the target cell membrane. In terms of biological role, antimicrobial peptide with activity against Gram-negative bacteria, but not against Gram-positive bacteria. Active against E.coli (MIC=5 uM), and P.aeruginosa (MIC=40 uM). Acts by disrupting cell membranes. Is able to depolarize membranes of Gram-positive and Gram-negative bacteria. Also acts as a potent chemoattractant for human leukocytes and activates them mainly through a GPCR, possibly FPRL1 coupled to the ERK1/2 MAPK pathway. Is unstructured in water but become helical upon binding to anionic lipids. In contrast to most dermaseptins, is not structured in the presence of zwitterionic lipids. Does not show hemolytic activity. The polypeptide is Dermaseptin-DA4 (Agalychnis dacnicolor (Giant Mexican leaf frog)).